Reading from the N-terminus, the 264-residue chain is ATP synthase subunit a (264 aa).

5 consecutive transmembrane segments (helical) span residues 39-59, 97-117, 139-159, 205-225, and 239-259; these read LDTL…FYIV, VAPL…MDLV, TADP…VIFY, LFGN…LPWW, and LLVI…YISL.

Belongs to the ATPase A chain family. In terms of assembly, F-type ATPases have 2 components, CF(1) - the catalytic core - and CF(0) - the membrane proton channel. CF(1) has five subunits: alpha(3), beta(3), gamma(1), delta(1), epsilon(1). CF(0) has three main subunits: a(1), b(2) and c(9-12). The alpha and beta chains form an alternating ring which encloses part of the gamma chain. CF(1) is attached to CF(0) by a central stalk formed by the gamma and epsilon chains, while a peripheral stalk is formed by the delta and b chains.

It localises to the cell inner membrane. Functionally, key component of the proton channel; it plays a direct role in the translocation of protons across the membrane. The sequence is that of ATP synthase subunit a from Coxiella burnetii (strain RSA 331 / Henzerling II).